The chain runs to 548 residues: Chaperonin GroEL (548 aa).

Residues 29–32, Lys50, 86–90, Gly414, 478–480, and Asp494 each bind ATP; these read TLGP, DGTTT, and NAA.

This sequence belongs to the chaperonin (HSP60) family. Forms a cylinder of 14 subunits composed of two heptameric rings stacked back-to-back. Interacts with the co-chaperonin GroES.

Its subcellular location is the cytoplasm. It catalyses the reaction ATP + H2O + a folded polypeptide = ADP + phosphate + an unfolded polypeptide.. Functionally, together with its co-chaperonin GroES, plays an essential role in assisting protein folding. The GroEL-GroES system forms a nano-cage that allows encapsulation of the non-native substrate proteins and provides a physical environment optimized to promote and accelerate protein folding. This is Chaperonin GroEL from Alcanivorax borkumensis (strain ATCC 700651 / DSM 11573 / NCIMB 13689 / SK2).